The following is a 338-amino-acid chain: Holliday junction branch migration complex subunit RuvB (338 aa).

Residues 1-181 form a large ATPase domain (RuvB-L) region; the sequence is MDRIVEIEKV…FGMDFRLQFY (181 aa). Residues leucine 20, arginine 21, glycine 62, lysine 65, threonine 66, threonine 67, 128–130, arginine 171, tyrosine 181, and arginine 218 contribute to the ATP site; that span reads EDF. Threonine 66 is a Mg(2+) binding site. The small ATPAse domain (RuvB-S) stretch occupies residues 182 to 252; sequence STAELSRIIQ…RAKEGLNALG (71 aa). The tract at residues 255 to 338 is head domain (RuvB-H); it reads SLGFDEMDIK…NRTKGLFDGE (84 aa). DNA-binding residues include arginine 309 and arginine 314.

The protein belongs to the RuvB family. Homohexamer. Forms an RuvA(8)-RuvB(12)-Holliday junction (HJ) complex. HJ DNA is sandwiched between 2 RuvA tetramers; dsDNA enters through RuvA and exits via RuvB. An RuvB hexamer assembles on each DNA strand where it exits the tetramer. Each RuvB hexamer is contacted by two RuvA subunits (via domain III) on 2 adjacent RuvB subunits; this complex drives branch migration. In the full resolvosome a probable DNA-RuvA(4)-RuvB(12)-RuvC(2) complex forms which resolves the HJ.

The protein localises to the cytoplasm. The enzyme catalyses ATP + H2O = ADP + phosphate + H(+). Functionally, the RuvA-RuvB-RuvC complex processes Holliday junction (HJ) DNA during genetic recombination and DNA repair, while the RuvA-RuvB complex plays an important role in the rescue of blocked DNA replication forks via replication fork reversal (RFR). RuvA specifically binds to HJ cruciform DNA, conferring on it an open structure. The RuvB hexamer acts as an ATP-dependent pump, pulling dsDNA into and through the RuvAB complex. RuvB forms 2 homohexamers on either side of HJ DNA bound by 1 or 2 RuvA tetramers; 4 subunits per hexamer contact DNA at a time. Coordinated motions by a converter formed by DNA-disengaged RuvB subunits stimulates ATP hydrolysis and nucleotide exchange. Immobilization of the converter enables RuvB to convert the ATP-contained energy into a lever motion, pulling 2 nucleotides of DNA out of the RuvA tetramer per ATP hydrolyzed, thus driving DNA branch migration. The RuvB motors rotate together with the DNA substrate, which together with the progressing nucleotide cycle form the mechanistic basis for DNA recombination by continuous HJ branch migration. Branch migration allows RuvC to scan DNA until it finds its consensus sequence, where it cleaves and resolves cruciform DNA. The sequence is that of Holliday junction branch migration complex subunit RuvB from Campylobacter curvus (strain 525.92).